Here is a 281-residue protein sequence, read N- to C-terminus: MANLSNLKTQISNTQDIGKITNAMQLVASAKLRRIGKKVTETQEYVSEVYAIFNEIIKHSSESIYLKNSANDIKKTLWVVVNSNLGLCGGYNANVNKLVISNFKKEDQIYAIGSKAVSAYNSKKIKIKNECTDVDIDFSPAQAKQIGNELLSYYSSGEFDEIQIVYTKFINNVTFEPTKLRVFPIIKEETQETSSSYYSFEPSAEEVLNNAVTLYLSTIIFGTIVESQVSEQASRRLAMENATNNGKELEYNLSIQYNRERQASITQEISEIVSGANALMG.

This sequence belongs to the ATPase gamma chain family. As to quaternary structure, F-type ATPases have 2 components, CF(1) - the catalytic core - and CF(0) - the membrane proton channel. CF(1) has five subunits: alpha(3), beta(3), gamma(1), delta(1), epsilon(1). CF(0) has three main subunits: a, b and c.

It localises to the cell membrane. Functionally, produces ATP from ADP in the presence of a proton gradient across the membrane. The gamma chain is believed to be important in regulating ATPase activity and the flow of protons through the CF(0) complex. The polypeptide is ATP synthase gamma chain (Mesoplasma florum (strain ATCC 33453 / NBRC 100688 / NCTC 11704 / L1) (Acholeplasma florum)).